Here is a 479-residue protein sequence, read N- to C-terminus: uncharacterized protein (479 aa).

Residues 150-158 (TSGSTGKPK), Asp-360, Arg-375, and Lys-462 each bind ATP.

It belongs to the ATP-dependent AMP-binding enzyme family.

May be involved in fatty acid metabolism. This is an uncharacterized protein from Bacillus subtilis (strain 168).